The chain runs to 554 residues: Urocanate hydratase (554 aa).

NAD(+) contacts are provided by residues 49-50, Q127, 173-175, E193, R198, 239-240, 260-264, 270-271, and Y319; these read GG, GMG, NA, QTSAH, and YI. The active site involves C407. Position 489 (G489) interacts with NAD(+).

Belongs to the urocanase family. NAD(+) serves as cofactor.

It is found in the cytoplasm. It carries out the reaction 4-imidazolone-5-propanoate = trans-urocanate + H2O. Its pathway is amino-acid degradation; L-histidine degradation into L-glutamate; N-formimidoyl-L-glutamate from L-histidine: step 2/3. Its function is as follows. Catalyzes the conversion of urocanate to 4-imidazolone-5-propionate. The protein is Urocanate hydratase of Bacillus velezensis (strain DSM 23117 / BGSC 10A6 / LMG 26770 / FZB42) (Bacillus amyloliquefaciens subsp. plantarum).